The primary structure comprises 290 residues: Protein-glutamine deamidase Cif (290 aa).

Residues 1–26 (MKISPNTISPSQSDPRMSTNVSQRSR) are disordered. Residues Cys117, His173, and Gln193 contribute to the active site.

The protein belongs to the Cif family.

The protein resides in the secreted. It is found in the host nucleus. The catalysed reaction is L-glutaminyl-[protein] + H2O = L-glutamyl-[protein] + NH4(+). In terms of biological role, protein-glutamine deamidase effector that inhibits the host cell cycle and other key cellular processes such as the actin network and programmed-cell death. Acts by mediating the side chain deamidation of 'Gln-40' of host NEDD8, converting it to glutamate, thereby abolishing the activity of cullin-RING-based E3 ubiquitin-protein ligase complexes (CRL complexes). Inactivation of CRL complexes prevents ubiquitination and subsequent degradation of the cyclin-dependent kinase inhibitors CDKN1A/p21 and CDKN1B/p27, leading to G1 and G2 cell cycle arrests in host cells. Also able to catalyze deamidation of 'Gln-40' of host ubiquitin in vitro; however, NEDD8 constitutes the preferred substrate in vivo. This chain is Protein-glutamine deamidase Cif, found in Yersinia pseudotuberculosis serotype O:3 (strain YPIII).